The sequence spans 166 residues: NADH-quinone oxidoreductase subunit E (166 aa).

Cysteine 92, cysteine 97, cysteine 133, and cysteine 137 together coordinate [2Fe-2S] cluster.

Belongs to the complex I 24 kDa subunit family. In terms of assembly, composed of 13 different subunits. Subunits NuoCD, E, F, and G constitute the peripheral sector of the complex. The cofactor is [2Fe-2S] cluster.

It carries out the reaction a quinone + NADH + 5 H(+)(in) = a quinol + NAD(+) + 4 H(+)(out). Its function is as follows. NDH-1 shuttles electrons from NADH, via FMN and iron-sulfur (Fe-S) centers, to quinones in the respiratory chain. The immediate electron acceptor for the enzyme in this species is believed to be ubiquinone. Couples the redox reaction to proton translocation (for every two electrons transferred, four hydrogen ions are translocated across the cytoplasmic membrane), and thus conserves the redox energy in a proton gradient. The chain is NADH-quinone oxidoreductase subunit E (nuoE) from Salmonella typhi.